The sequence spans 272 residues: Hydroxyethylthiazole kinase (272 aa).

Residue Met-46 coordinates substrate. ATP-binding residues include Arg-122 and Thr-168. Gly-195 is a binding site for substrate.

The protein belongs to the Thz kinase family. Mg(2+) serves as cofactor.

The catalysed reaction is 5-(2-hydroxyethyl)-4-methylthiazole + ATP = 4-methyl-5-(2-phosphooxyethyl)-thiazole + ADP + H(+). It participates in cofactor biosynthesis; thiamine diphosphate biosynthesis; 4-methyl-5-(2-phosphoethyl)-thiazole from 5-(2-hydroxyethyl)-4-methylthiazole: step 1/1. Its function is as follows. Catalyzes the phosphorylation of the hydroxyl group of 4-methyl-5-beta-hydroxyethylthiazole (THZ). This chain is Hydroxyethylthiazole kinase, found in Alkaliphilus metalliredigens (strain QYMF).